Consider the following 523-residue polypeptide: WD repeat-containing protein YPL247C (523 aa).

The interval 1–64 (MDPFHNGNKR…TTNGGNSKRN (64 aa)) is disordered. Over residues 9 to 40 (KRSSISFGSSQRQPYNKNNYLSGTNGPSSAAQ) the composition is skewed to polar residues. Serine 47 carries the phosphoserine modification. The segment covering 52–64 (SGNTTNGGNSKRN) has biased composition (low complexity). Residue serine 65 is modified to Phosphoserine. WD repeat units lie at residues 173-213 (DVVY…RQFQ), 241-281 (GTFP…YVKT), 285-325 (AHDS…HSTI), and 392-432 (GHGS…MEIN). Positions 436-472 (SKSPSIHGTSLEDPDGDTEMTDGGAGSGLNEDPLSLN) are disordered.

Belongs to the WD repeat WDR68 family.

It localises to the cytoplasm. Its subcellular location is the nucleus. This is WD repeat-containing protein YPL247C from Saccharomyces cerevisiae (strain ATCC 204508 / S288c) (Baker's yeast).